The chain runs to 475 residues: Cysteine--tRNA ligase (475 aa).

Cys28 is a Zn(2+) binding site. Positions 30–40 (PTVYDETHIGH) match the 'HIGH' region motif. Residues Cys208, His233, and Glu237 each coordinate Zn(2+). Residues 265 to 269 (KMSKS) carry the 'KMSKS' region motif. Lys268 provides a ligand contact to ATP.

Belongs to the class-I aminoacyl-tRNA synthetase family. It depends on Zn(2+) as a cofactor.

The protein resides in the cytoplasm. The catalysed reaction is tRNA(Cys) + L-cysteine + ATP = L-cysteinyl-tRNA(Cys) + AMP + diphosphate. The polypeptide is Cysteine--tRNA ligase (Methanococcus vannielii (strain ATCC 35089 / DSM 1224 / JCM 13029 / OCM 148 / SB)).